The primary structure comprises 440 residues: Alpha-methylserine aldolase (440 aa).

At Lys-255 the chain carries N6-(pyridoxal phosphate)lysine.

Belongs to the SHMT family. Alpha-methylserine aldolase subfamily. Homodimer. Requires pyridoxal 5'-phosphate as cofactor.

It carries out the reaction 2-methyl-L-serine = formaldehyde + L-alanine. Functionally, catalyzes the reversible interconversion of alpha-methyl-L-serine to L-alanine and formaldehyde. The polypeptide is Alpha-methylserine aldolase (Variovorax paradoxus).